The sequence spans 474 residues: PTS system sucrose-specific EIIBC component (474 aa).

One can recognise a PTS EIIB type-1 domain in the interval 4–87 (SQIAQQVIDK…SKLLGIGDMT (84 aa)). Cys26 serves as the catalytic Phosphocysteine intermediate; for EIIB activity. Positions 107–474 (KGLADIFVPI…LGKRAQLKAE (368 aa)) constitute a PTS EIIC type-1 domain. Transmembrane regions (helical) follow at residues 109–129 (LADI…LMGI), 158–178 (FINT…GFSA), 182–202 (FGGN…PALS), 229–249 (VGYQ…ATLE), 264–284 (ITPL…IGPI), 303–323 (LGFV…ITGM), 345–365 (FIFP…LGAA), 376–396 (IAVP…MFGV), 403–423 (PFIS…LFNV), and 444–464 (LAMY…LTVI).

The protein resides in the cell inner membrane. It carries out the reaction N(pros)-phospho-L-histidyl-[protein](out) + sucrose = sucrose 6(G)-phosphate(in) + L-histidyl-[protein]. Its function is as follows. The phosphoenolpyruvate-dependent sugar phosphotransferase system (sugar PTS), a major carbohydrate active transport system, catalyzes the phosphorylation of incoming sugar substrates concomitantly with their translocation across the cell membrane. This system is involved in sucrose transport. This Pasteurella multocida (strain Pm70) protein is PTS system sucrose-specific EIIBC component (scrA).